Reading from the N-terminus, the 379-residue chain is Zinc finger protein 883 (379 aa).

13 consecutive C2H2-type zinc fingers follow at residues 13–35 (YLCT…QKTH), 41–63 (YECK…QRIH), 69–91 (YECN…QRVH), 97–119 (YECN…ERIH), 125–147 (YPCN…HRIH), 153–175 (YECT…QGIH), 181–203 (YQCK…QRTH), 209–231 (YECN…QRIH), 237–259 (YECN…QRTH), 265–287 (YVCK…LKIH), 293–315 (YQCN…QRTH), 321–343 (YQCN…KRIH), and 349–371 (YQCT…QKTH).

The protein belongs to the krueppel C2H2-type zinc-finger protein family.

It is found in the nucleus. Its function is as follows. May be involved in transcriptional regulation. The sequence is that of Zinc finger protein 883 (ZNF883) from Homo sapiens (Human).